The sequence spans 266 residues: UPF0354 protein LMHCC_0955 (266 aa).

The protein belongs to the UPF0354 family.

This chain is UPF0354 protein LMHCC_0955, found in Listeria monocytogenes serotype 4a (strain HCC23).